A 336-amino-acid chain; its full sequence is MELHILFFILAGLLIAVLISFSLWSARREKSRIFSNTFSTRPPSTPINNIVSDVPPSLNPQSYAQTTGQHGETEADNPVQIQQEVESSLREIKINLPGQDSAAYQSKVEETPIYSGQPVLPVQPQYQTQVQYQTQPQHIEPAFTQAPQSPIAEATSVLEQSVEELERQAAQGDVDIYSDASVRVELAKNSMQADSVAEQKPVAENNMLTLYVVAPEGQQFRGDYVVQSLEALGFQYGEYQIFHRHQHMGNSASPVIFSVANMMQPGIFDLTKIEHFSTVGLVLFMHLPSEGNDVVNFKLLLKTTENLAQALGGFVLNEHREIFDENSRQSYLARVS.

The Periplasmic portion of the chain corresponds to 1–2 (ME). Residues 3-23 (LHILFFILAGLLIAVLISFSL) traverse the membrane as a helical segment. Residues 24–336 (WSARREKSRI…SRQSYLARVS (313 aa)) are Cytoplasmic-facing. Positions 56-77 (PSLNPQSYAQTTGQHGETEADN) are disordered. Residues 59-70 (NPQSYAQTTGQH) are compositionally biased toward polar residues.

It belongs to the ZipA family. In terms of assembly, interacts with FtsZ via their C-terminal domains.

The protein localises to the cell inner membrane. Essential cell division protein that stabilizes the FtsZ protofilaments by cross-linking them and that serves as a cytoplasmic membrane anchor for the Z ring. Also required for the recruitment to the septal ring of downstream cell division proteins. In Actinobacillus pleuropneumoniae serotype 3 (strain JL03), this protein is Cell division protein ZipA.